A 743-amino-acid chain; its full sequence is 1,4-alpha-glucan branching enzyme GlgB (743 aa).

Residue Asp423 is the Nucleophile of the active site. The active-site Proton donor is Glu476.

The protein belongs to the glycosyl hydrolase 13 family. GlgB subfamily. Monomer.

The enzyme catalyses Transfers a segment of a (1-&gt;4)-alpha-D-glucan chain to a primary hydroxy group in a similar glucan chain.. It functions in the pathway glycan biosynthesis; glycogen biosynthesis. Functionally, catalyzes the formation of the alpha-1,6-glucosidic linkages in glycogen by scission of a 1,4-alpha-linked oligosaccharide from growing alpha-1,4-glucan chains and the subsequent attachment of the oligosaccharide to the alpha-1,6 position. The chain is 1,4-alpha-glucan branching enzyme GlgB from Pseudomonas fluorescens (strain Pf0-1).